The following is a 129-amino-acid chain: Protein Turandot A1 (129 aa).

The first 21 residues, 1–21 (MNSSTALMCFALLLISPLCMG), serve as a signal peptide directing secretion. Residue Asn-49 is glycosylated (N-linked (GlcNAc...) asparagine).

It belongs to the Turandot family.

Its subcellular location is the secreted. Its function is as follows. A humoral factor that plays a role in stress tolerance; gives increased resistance to the lethal effects of bacterial challenge and stress. Regulated by the JAK/STAT pathway and NF-KB-like Relish pathway in the fat body, upd3 in the hemocytes and Mekk1 in response to septic injury and consequent immune response. This Drosophila simulans (Fruit fly) protein is Protein Turandot A1 (TotA1).